The sequence spans 134 residues: Cerato-platanin (134 aa).

The first 14 residues, 1–14 (MKFSILPMIASAMA), serve as a signal peptide directing secretion. Positions 18–20 (SYD) are binding of oligomers of N-acetylglucosamine (GlcNAc). Binding of N-acetylglucosamine tetramer (GlcNAc-4) stretches follow at residues 31-43 (SVAC…GLMA), 65-68 (GWDS), and 91-95 (DSGRG). Intrachain disulfides connect Cys-34–Cys-71 and Cys-74–Cys-129. The interval 113-116 (AGRV) is binding of oligomers of N-acetylglucosamine (GlcNAc).

Belongs to the cerato-platanin family. As to quaternary structure, monomer.

It localises to the secreted. The protein localises to the cell wall. Functionally, phytotoxin which causes production of phytoalexin in platanus acerifolia, platanus occidentalis and platanus orientalis. Induces cell necrosis in tobacco leaves, and in callus cells and leaves of P.acerifolia. Induces reactive oxygen species (ROS) synthesis, nitric oxide (NO) production and mitogen-activated protein kinases (MAPKs) phosphorylation in the leaves of A.thaliana and P.acerifolia. Results in H(2)O(2) production on the epidermis around the stomata, rapid closure of the stomata, reduced photosynthetic and CO(2) assimilation rate, and an increase in a number of volatile organic compound (VOC) emission in A.thaliana leaves. Induces overexpression of genes related to salicylic acid- and ethylene-signaling, camalexin synthesis, ROS production and oxidative stress, and genes of various receptor kinases, and down-regulation of a number of jasmonic acid (JA)-signaling genes in A.thaliana leaves. Renders resistance against C.platani in A.thaliana and P.acerifolia. Renders localised resistance of A.thaliana against infection by virulent foliar pathogens B.cinerea and P.syringae pv. tomato. Binds cellulose analog carboxymethyl cellulose (CMC). Expansin-like protein with probable fungal and plant cell wall loosening activity based on its non-enzymatic cellulose weakening activity in vitro. Increases glucose production by cellulase after pre-incubation of cellulose with this protein. In contrast, according to PubMed:23512479, no synergistic effect with cellulases. May have a structural role in the fungal cell wall based on its ability to bind chitin, but does not bind beta-1,3-glucan. The protein is Cerato-platanin of Ceratocystis fimbriata f. sp. platani.